The chain runs to 188 residues: CASP-like protein 4B1 (188 aa).

The disordered stretch occupies residues 1 to 34; the sequence is MTNPDNMKPVEATDVESAAEKTSEPTPASGTSTI. Topologically, residues 1-46 are cytoplasmic; that stretch reads MTNPDNMKPVEATDVESAAEKTSEPTPASGTSTITQRWKREDLIKK. Over residues 24–34 the composition is skewed to polar residues; sequence EPTPASGTSTI. Residues 47–67 form a helical membrane-spanning segment; that stretch reads ASPITRGICLLFSLIAFLIMV. The Extracellular portion of the chain corresponds to 68-84; it reads SNKHGYGRNFNDYEEYR. A helical transmembrane segment spans residues 85-105; it reads YVLAISIISTLYTAWQTFAHF. Residues 106–124 are Cytoplasmic-facing; sequence SKREIFDRRTSILVDFSGD. Residues 125-145 form a helical membrane-spanning segment; that stretch reads QIVAYLLISAASSAIPLTNIF. At 146–156 the chain is on the extracellular side; sequence REGQDNIFTDS. Residues 157 to 177 form a helical membrane-spanning segment; sequence AASAISMAIFAFIALALSALF. Residues 178–188 are Cytoplasmic-facing; that stretch reads SGYKLSTHSFI.

This sequence belongs to the Casparian strip membrane proteins (CASP) family. Homodimer and heterodimers.

It localises to the cell membrane. This Arabidopsis thaliana (Mouse-ear cress) protein is CASP-like protein 4B1.